A 1758-amino-acid polypeptide reads, in one-letter code: RanBP2-like and GRIP domain-containing protein 3 (1758 aa).

A Phosphoserine modification is found at Ser21. The stretch at Pro60–Gln93 is one TPR 1 repeat. The stretch at Arg176–Arg229 forms a coiled coil. The stretch at Gln584 to Ile617 is one TPR 2 repeat. The tract at residues Gly761–Ala805 is disordered. Over residues Ser779–Pro798 the composition is skewed to low complexity. A coiled-coil region spans residues Ala805–Ala837. The region spanning His1037–Asp1173 is the RanBD1 1 domain. Disordered regions lie at residues Val1216 to Glu1248, Ala1307 to Phe1335, and Asn1581 to Ser1622. Polar residues predominate over residues Ile1236–Pro1245. Positions Thr1318–Arg1330 are enriched in acidic residues. A RanBD1 2 domain is found at Tyr1334 to Lys1470. Over residues Asn1581–Glu1594 the composition is skewed to polar residues. Basic and acidic residues predominate over residues Ser1595–Val1618. One can recognise a GRIP domain in the interval Gln1703–Val1753.

The protein is RanBP2-like and GRIP domain-containing protein 3 (RGPD3) of Homo sapiens (Human).